The primary structure comprises 332 residues: Clavesin-1 (332 aa).

Residues 96–257 form the CRAL-TRIO domain; the sequence is IKRALMDGFP…EFGGTLPPYD (162 aa). The interval 300 to 332 is disordered; it reads KYMKRSHSVVEPGTLRHEEERENENTQPLLALD. Over residues 313-323 the composition is skewed to basic and acidic residues; sequence TLRHEEERENE.

It localises to the golgi apparatus. The protein localises to the trans-Golgi network membrane. The protein resides in the early endosome membrane. It is found in the cytoplasmic vesicle. Its subcellular location is the clathrin-coated vesicle. Functionally, required for normal morphology of late endosomes and/or lysosomes in neurons. Binds phosphatidylinositol 3,5-bisphosphate (PtdIns(3,5)P2). In Xenopus laevis (African clawed frog), this protein is Clavesin-1 (clvs1).